We begin with the raw amino-acid sequence, 380 residues long: Cytochrome b (380 aa).

4 helical membrane passes run 34 to 54, 78 to 99, 114 to 134, and 179 to 199; these read SGSL…FLAM, WFLR…YCHI, WNVG…GYVL, and FFPF…IHLV. Heme b contacts are provided by His-84 and His-98. Positions 183 and 197 each coordinate heme b. Residue His-202 participates in a ubiquinone binding. The next 4 membrane-spanning stretches (helical) occupy residues 227–247, 289–309, 321–341, and 348–369; these read TKDT…ALLF, LGGV…PLLN, LSQA…WIGS, and YVLL…GFPI.

This sequence belongs to the cytochrome b family. In terms of assembly, the main subunits of complex b-c1 are: cytochrome b, cytochrome c1 and the Rieske protein. Requires heme b as cofactor.

Its subcellular location is the mitochondrion inner membrane. In terms of biological role, component of the ubiquinol-cytochrome c reductase complex (complex III or cytochrome b-c1 complex) that is part of the mitochondrial respiratory chain. The b-c1 complex mediates electron transfer from ubiquinol to cytochrome c. Contributes to the generation of a proton gradient across the mitochondrial membrane that is then used for ATP synthesis. The polypeptide is Cytochrome b (MT-CYB) (Strongylocentrotus purpuratus (Purple sea urchin)).